The primary structure comprises 397 residues: DnaJ homolog subfamily A member 4 (397 aa).

A J domain is found at 4–70 (ETQYYDILGV…RDVYDQGGEQ (67 aa)). Ser-18 is modified (phosphoserine). A CR-type zinc finger spans residues 122–206 (GVTKKLALQK…CSGAKVIREK (85 aa)). 8 residues coordinate Zn(2+): Cys-135, Cys-138, Cys-151, Cys-154, Cys-178, Cys-181, Cys-194, and Cys-197. 4 CXXCXGXG motif repeats span residues 135 to 142 (CEKCEGVG), 151 to 158 (CPLCKGRG), 178 to 185 (CIECKGQG), and 194 to 201 (CESCSGAK). Cys-394 is modified (cysteine methyl ester). Cys-394 carries S-farnesyl cysteine lipidation. Positions 395-397 (QTA) are cleaved as a propeptide — removed in mature form.

It is found in the membrane. This chain is DnaJ homolog subfamily A member 4 (DNAJA4), found in Homo sapiens (Human).